The following is a 267-amino-acid chain: Regulatory protein VirG (267 aa).

A Response regulatory domain is found at 29–143; the sequence is HVLLVDDDVA…EFLARIRVAL (115 aa). D78 carries the post-translational modification 4-aspartylphosphate. Positions 155-255 form a DNA-binding region, ompR/PhoB-type; the sequence is RRSFCFTDWT…ARGAGYFFDA (101 aa).

Post-translationally, phosphorylated by wide host range (WHR) VirA protein.

Its subcellular location is the cytoplasm. Its function is as follows. VirG is required for the positive regulation of at least two vir loci encoded by the Ti plasmid of A.tumefaciens. In Agrobacterium tumefaciens (strain 15955), this protein is Regulatory protein VirG (virG).